The primary structure comprises 335 residues: Phosphate acyltransferase (335 aa).

The protein belongs to the PlsX family. In terms of assembly, homodimer. Probably interacts with PlsY.

It localises to the cytoplasm. It carries out the reaction a fatty acyl-[ACP] + phosphate = an acyl phosphate + holo-[ACP]. It functions in the pathway lipid metabolism; phospholipid metabolism. Catalyzes the reversible formation of acyl-phosphate (acyl-PO(4)) from acyl-[acyl-carrier-protein] (acyl-ACP). This enzyme utilizes acyl-ACP as fatty acyl donor, but not acyl-CoA. The sequence is that of Phosphate acyltransferase from Leptospira interrogans serogroup Icterohaemorrhagiae serovar copenhageni (strain Fiocruz L1-130).